A 1150-amino-acid polypeptide reads, in one-letter code: DNA polymerase (1150 aa).

Positions 1–53 (MSLVQGHGTSGLFTEPPNPINQQESSGPSLPAQDAAQAFASSPRAGATSTIVN) are disordered.

It belongs to the DNA polymerase type-B family. Heterodimer with the terminal protein; this heterodimer binds to bp 9 to 18 of the genome. Forms a complex with viral pTP, DBP and hosts NFIA and POU2F1/OCT1 for initiation of replication.

It localises to the host nucleus. The enzyme catalyses DNA(n) + a 2'-deoxyribonucleoside 5'-triphosphate = DNA(n+1) + diphosphate. In terms of biological role, eukaryotic-type DNA polymerase involved in viral genomic replication. DNA synthesis is protein primed, and acts in a strand displacement replication. Assembles in complex with viral pTP, DBP, host NFIA and host POU2F1/OCT1 on viral origin of replication. The polymerase covalently transfers dCMP onto pTP, thereby initiating complementary strand synthesis. This is DNA polymerase from Canis lupus familiaris (Dog).